The sequence spans 1813 residues: Latent-transforming growth factor beta-binding protein 2 (1813 aa).

The signal sequence occupies residues 1-35; sequence MRAPTTARCSGCIQRVRWRGFLPLVLAVLMGTSHA. The tract at residues 94-115 is heparin-binding; it reads NPGWLAEAEARRPPRTQQLRRV. A disordered region spans residues 103–152; it reads ARRPPRTQQLRRVQPPVQTRRSHPRGQQQIAARAAPSVARLETPQRPAAA. Over residues 108–132 the composition is skewed to polar residues; the sequence is RTQQLRRVQPPVQTRRSHPRGQQQI. An N-linked (GlcNAc...) asparagine glycan is attached at Asn175. The 33-residue stretch at 181-213 folds into the EGF-like 1 domain; that stretch reads IKPVCQPPCQNRGSCSRPQVCICRSGFRGARCE. Intrachain disulfides connect Cys185–Cys195, Cys189–Cys201, and Cys203–Cys212. Positions 220-305 are disordered; sequence EFDPQNARPV…QLMSNALPSG (86 aa). Residues 226 to 243 are heparin-binding; that stretch reads ARPVPRRSVERAPGPHRS. Over residues 257-266 the composition is skewed to pro residues; it reads LVPPPSPPPS. Polar residues predominate over residues 293-302; the sequence is ANGQLMSNAL. An N-linked (GlcNAc...) asparagine glycan is attached at Asn328. 329–339 is a heparin binding site; it reads LTEKIKKIKVV. The EGF-like 2 domain maps to 381–413; it reads RIYFCQIPCLNGGRCIGRDECWCPANSTGKFCH. Intrachain disulfides connect Cys385–Cys395, Cys389–Cys401, and Cys403–Cys412. Asn406 is a glycosylation site (N-linked (GlcNAc...) asparagine). At Ser491 the chain carries Phosphoserine. Residues 492–524 form a disordered region; that stretch reads VETRASHRPHGNLGHSPWASNSIPARAGEAPRP. In terms of domain architecture, TB 1 spans 536–588; it reads GQCYLSTVNGQCANPLGSLTSQEDCCGSVGTFWGVTSCAPCPPRQEGPAFPVI. Intrachain disulfides connect Cys538–Cys560, Cys547–Cys573, and Cys561–Cys576. An N-linked (GlcNAc...) asparagine glycan is attached at Asn603. The EGF-like 3; calcium-binding domain maps to 609–649; that stretch reads DINECLTLGLCKDSECVNTRGSYLCTCRPGLMLDPSRSRCV. 7 disulfide bridges follow: Cys613/Cys624, Cys619/Cys633, Cys635/Cys648, Cys661/Cys683, Cys670/Cys696, Cys684/Cys699, and Cys685/Cys711. One can recognise a TB 2 domain in the interval 659–711; that stretch reads GLCYRSLGSGTCTLPLVHRITKQICCCSRVGKAWGSTCEQCPLPGTEAFREIC. Disordered stretches follow at residues 730 to 761 and 787 to 819; these read KAEE…QPLR and SAPH…PAEE. The EGF-like 4 domain maps to 835 to 877; it reads DFDPCFAGASNICGPGTCVSLPNGYRCVCSPGYQLHPSQDYCT. Intrachain disulfides connect Cys839/Cys852, Cys847/Cys861, Cys863/Cys876, Cys882/Cys893, Cys887/Cys902, Cys904/Cys919, Cys925/Cys936, Cys931/Cys945, Cys947/Cys959, Cys965/Cys976, Cys971/Cys985, Cys988/Cys999, Cys1005/Cys1016, Cys1011/Cys1025, Cys1027/Cys1040, Cys1046/Cys1057, Cys1052/Cys1066, Cys1069/Cys1082, Cys1088/Cys1099, Cys1094/Cys1108, Cys1111/Cys1124, Cys1130/Cys1142, Cys1137/Cys1151, Cys1153/Cys1165, Cys1171/Cys1183, Cys1177/Cys1192, Cys1194/Cys1207, Cys1213/Cys1224, Cys1219/Cys1233, Cys1235/Cys1249, Cys1255/Cys1268, Cys1263/Cys1277, Cys1281/Cys1293, Cys1299/Cys1311, Cys1305/Cys1320, Cys1322/Cys1335, Cys1341/Cys1353, Cys1348/Cys1362, Cys1364/Cys1378, Cys1405/Cys1428, Cys1415/Cys1440, Cys1429/Cys1443, Cys1430/Cys1455, Cys1481/Cys1494, Cys1489/Cys1503, Cys1505/Cys1518, Cys1524/Cys1534, Cys1529/Cys1543, and Cys1545/Cys1558. Residues 878 to 920 form the EGF-like 5; calcium-binding domain; it reads DDNECMRNPCEGRGRCVNSVGSYSCLCYPGYTLVTLGDTQECQ. Residues 921–960 form the EGF-like 6; calcium-binding domain; it reads DIDECEQPGVCSGGRCSNTEGSYHCECDRGYIMVRKGHCQ. Residues 961–1000 enclose the EGF-like 7; calcium-binding domain; it reads DINECRHPGTCPDGRCVNSPGSYTCLACEEGYVGQSGSCV. The region spanning 1001–1041 is the EGF-like 8; calcium-binding domain; it reads DVNECLTPGICTHGRCINMEGSFRCSCEPGYEVTPDKKGCR. In terms of domain architecture, EGF-like 9; calcium-binding spans 1042–1083; sequence DVDECASRASCPTGLCLNTEGSFTCSACQSGYWVNEDGTACE. Positions 1084 to 1125 constitute an EGF-like 10; calcium-binding domain; sequence DLDECAFPGVCPTGVCTNTVGSFSCKDCDQGYRPNPLGNRCE. The EGF-like 11; calcium-binding domain maps to 1126–1166; it reads DVDECEGPQSSCRGGECKNTEGSYQCLCHQGFQLVNGTMCE. A glycan (N-linked (GlcNAc...) asparagine) is linked at Asn1161. Residues 1167-1208 enclose the EGF-like 12; calcium-binding domain; sequence DVNECVGEEHCAPHGECLNSLGSFFCLCAPGFASAEGGTRCQ. An EGF-like 13; calcium-binding domain is found at 1209 to 1250; the sequence is DVDECAATDPCPGGHCVNTEGSFSCLCETASFQPSPDSGECL. The region spanning 1251 to 1294 is the EGF-like 14; calcium-binding domain; it reads DIDECEDREDPVCGAWRCENSPGSYRCILDCQPGFYVAPNGDCI. In terms of domain architecture, EGF-like 15; calcium-binding spans 1295-1336; the sequence is DIDECANDTVCGNHGFCDNTDGSFRCLCDQGFETSPSGWECV. A glycan (N-linked (GlcNAc...) asparagine) is linked at Asn1301. Residues 1337–1379 enclose the EGF-like 16; calcium-binding domain; sequence DVNECELMMAVCGDALCENVEGSFLCLCASDLEEYDAEEGHCR. The TB 3 domain maps to 1403-1455; the sequence is MECYSEHNGGPPCSQILGQNSTQAECCCTQGARWGKACAPCPSEDSVEFSQLC. An N-linked (GlcNAc...) asparagine glycan is attached at Asn1422. The EGF-like 17; calcium-binding domain occupies 1477-1519; that stretch reads DADECVLFGPALCQNGRCSNIVPGYICLCNPGYHYDASSRKCQ. In terms of domain architecture, EGF-like 18; calcium-binding spans 1520–1559; it reads DHNECQDLACENGECVNQEGSFHCLCNPPLTLDLSGQRCV. A glycan (N-linked (GlcNAc...) asparagine) is linked at Asn1560. One can recognise a TB 4 domain in the interval 1576 to 1628; it reads DICWKKVTNDVCSQPLRGHHTTYTECCCQDGEAWSQQCALCPPRSSEVYAQLC. 4 cysteine pairs are disulfide-bonded: Cys1578-Cys1601, Cys1587-Cys1613, Cys1602-Cys1616, and Cys1603-Cys1628. A C-terminal domain region spans residues 1631-1813; it reads ARIEAERGAG…PGPPHCAAKE (183 aa). Positions 1671–1717 are disordered; sequence YLGPEDTAPEPPFSNPASQPGDNTPVLEPPLQPSELQPHYLASHSEP. Residues 1725 to 1765 enclose the EGF-like 19; calcium-binding domain; the sequence is QAEECGILNGCENGRCVRVREGYTCDCFEGFQLDAPTLACV. 6 disulfides stabilise this stretch: Cys1729/Cys1740, Cys1735/Cys1749, Cys1751/Cys1764, Cys1770/Cys1785, Cys1780/Cys1794, and Cys1796/Cys1809. The region spanning 1766–1810 is the EGF-like 20; calcium-binding domain; that stretch reads DVNECEDLNGPARLCAHGHCENTEGSYRCHCSPGYVAEPGPPHCA.

It belongs to the LTBP family. In terms of assembly, forms part of the large latent transforming growth factor beta precursor complex; removal is essential for activation of complex. Interacts with SDC4. Interacts (via C-terminal domain) with FBN1 (via N-terminal domain) in a Ca(+2)-dependent manner. In terms of processing, N-Glycosylated. Post-translationally, contains hydroxylated asparagine residues. As to expression, expressed in the anterior chamber of the eye.

The protein localises to the secreted. It is found in the extracellular space. The protein resides in the extracellular matrix. Functionally, may play an integral structural role in elastic-fiber architectural organization and/or assembly. This Mus musculus (Mouse) protein is Latent-transforming growth factor beta-binding protein 2 (Ltbp2).